The chain runs to 311 residues: MKRIADEELVREERAEESTQKWLQDAKFQEILGADSSHKSLFVLLSHPDGSQGILLANKSPFSEEKSDIEKLLATAQLQEISRNDIFGSYNIEIDPKLNLLKSQLIYPINDRLIAKYRQEEKFVIRETPELYETVTRPYIEKYQLNLNWVYNCLEKRSEVDKIVFEDPDNENGFVLLQDIKWDGKTLENLYVLAICHRHGLKSVRDLTGDDLEMLYNMRDKSLEAINQKYGLKTDQIKCYFHYQPSFYHLHVHFINLKYDAPASTTMSAILLDDVINNLELNPEHYKKSTLTFTRKNGDKLMEMFREALKN.

Residues glutamate 159, lysine 181, and 242-253 (HYQPSFYHLHVH) each bind substrate. The Histidine triad motif signature appears at 249 to 253 (HLHVH). The active-site Nucleophile is histidine 251.

It belongs to the HIT family. As to expression, expressed in neurons in the ventral cord, the nerve ring and the pharynx.

The protein resides in the nucleus. It catalyses the reaction a 5'-end (N(7)-methyl 5'-triphosphoguanosine)-ribonucleoside in mRNA + H2O = N(7)-methyl-GMP + a 5'-end diphospho-ribonucleoside in mRNA + 2 H(+). The enzyme catalyses a 5'-end (N(2),N(2),N(7)-trimethyl 5'-triphosphoguanosine)-ribonucleoside in mRNA + H2O = (N(2),N(2),N(7))-trimethyl-GMP + a 5'-end diphospho-ribonucleoside in mRNA + 2 H(+). With respect to regulation, the hydrolytic product 7-methylguanosine diphosphate (m7GDP) efficiently inhibits the decapping scavenger activity and acts as a competitive inhibitor in vitro. Functionally, decapping scavenger enzyme that catalyzes the cleavage of a residual cap structure following the degradation of mRNAs of the 3'-&gt;5' exosome-mediated mRNA decay pathway. Hydrolyzes cap analog structures like 7-methylguanosine nucleoside triphosphate (m7GpppG) and tri-methyl guanosine nucleoside triphosphate (m3(2,2,7)GpppG) with up to 2 nucleotide substrates (small capped oligoribonucleotides) and specifically releases 5'-phosphorylated RNA fragments and 7-methylguanosine monophosphate (m7GMP). Does not hydrolyze unmethylated cap analog (GpppG) and shows no decapping activity on intact m7GpppG-capped mRNA molecules. Does not hydrolyze 7-methylguanosine diphosphate (m7GDP) and tri-methylguanosine diphosphate (m3(2,2,7)GDP) to m(7)GMP and m3(2,2,7)GMP, respectively. May also play a role in the 5'-&gt;3 mRNA decay pathway; m7GDP, the downstream product released by the 5'-&gt;3' mRNA mediated decapping activity, may be also converted by dcs-1 to m7GMP. Binds to m7GpppG and strongly to m7GDP. This Caenorhabditis elegans protein is m7GpppX diphosphatase (dcs-1).